Consider the following 1148-residue polypeptide: Ice nucleation protein (1148 aa).

Disordered regions lie at residues 110-131, 222-256, and 367-394; these read ADPASTSTSTSTSTLTPMPTAI, YGSTQTSGEDSSLTAGYGSTQTAQEGSNLTAGYGS, and GSTQTSGSDSSLTAGYGSTQTAQEGSNL. Positions 114–128 are enriched in low complexity; sequence STSTSTSTSTLTPMP. The segment at 180–1099 is octapeptide periodicity; that stretch reads ATYGSTLSGD…LSAGEDSTLI (920 aa). The span at 230 to 250 shows a compositional bias: polar residues; that stretch reads EDSSLTAGYGSTQTAQEGSNL.

It belongs to the bacterial ice nucleation protein family.

The protein resides in the cell outer membrane. In terms of biological role, ice nucleation proteins enable bacteria to nucleate crystallization in supercooled water. In Pseudomonas syringae, this protein is Ice nucleation protein (inaK).